We begin with the raw amino-acid sequence, 361 residues long: Queuine tRNA-ribosyltransferase (361 aa).

Asp92 serves as the catalytic Proton acceptor. Substrate-binding positions include 92 to 96 (DSGGF), Asp146, Gln189, and Gly216. Residues 247 to 253 (GVGKPAD) form an RNA binding region. Asp266 functions as the Nucleophile in the catalytic mechanism. The tract at residues 271 to 275 (TRSGR) is RNA binding; important for wobble base 34 recognition. 4 residues coordinate Zn(2+): Cys304, Cys306, Cys309, and His335.

It belongs to the queuine tRNA-ribosyltransferase family. In terms of assembly, homodimer. Within each dimer, one monomer is responsible for RNA recognition and catalysis, while the other monomer binds to the replacement base PreQ1. It depends on Zn(2+) as a cofactor.

The catalysed reaction is 7-aminomethyl-7-carbaguanine + guanosine(34) in tRNA = 7-aminomethyl-7-carbaguanosine(34) in tRNA + guanine. The protein operates within tRNA modification; tRNA-queuosine biosynthesis. Its function is as follows. Catalyzes the base-exchange of a guanine (G) residue with the queuine precursor 7-aminomethyl-7-deazaguanine (PreQ1) at position 34 (anticodon wobble position) in tRNAs with GU(N) anticodons (tRNA-Asp, -Asn, -His and -Tyr). Catalysis occurs through a double-displacement mechanism. The nucleophile active site attacks the C1' of nucleotide 34 to detach the guanine base from the RNA, forming a covalent enzyme-RNA intermediate. The proton acceptor active site deprotonates the incoming PreQ1, allowing a nucleophilic attack on the C1' of the ribose to form the product. After dissociation, two additional enzymatic reactions on the tRNA convert PreQ1 to queuine (Q), resulting in the hypermodified nucleoside queuosine (7-(((4,5-cis-dihydroxy-2-cyclopenten-1-yl)amino)methyl)-7-deazaguanosine). This Rickettsia canadensis (strain McKiel) protein is Queuine tRNA-ribosyltransferase.